An 89-amino-acid polypeptide reads, in one-letter code: HssA/B-like protein DDB_G0295685 (89 aa).

It belongs to the hssA/B family.

The chain is HssA/B-like protein DDB_G0295685 from Dictyostelium discoideum (Social amoeba).